A 481-amino-acid chain; its full sequence is Phosphatidylinositol 4-kinase type 2-beta (481 aa).

The span at 1-11 (MEDPSEPDRLA) shows a compositional bias: basic and acidic residues. The segment at 1–82 (MEDPSEPDRL…VSRSSSAELD (82 aa)) is disordered. Phosphoserine occurs at positions 12, 17, and 45. Residues 53-64 (AGEEGEAGDEEL) are compositionally biased toward acidic residues. Residues 120-451 (GIFPERISQG…VQIPCVIVER (332 aa)) form the PI3K/PI4K catalytic domain. The G-loop stretch occupies residues 126–132 (ISQGSSG). Serine 133 and lysine 148 together coordinate ATP. An important for substrate binding region spans residues 153 to 155 (EPY). Residues 161–174 (KWTKYVHKVCCPCC) form an important for interaction with membranes region. ATP contacts are provided by residues 257 to 260 (QLFV) and 271 to 272 (RK). Residues 264 to 272 (KEAEYWLRK) are important for interaction with membranes. Residues 301 to 309 (RNTDRGNDN) are catalytic loop. Positions 342–362 (AIDNGLAFPFKHPDEWRAYPF) are activation loop. Aspartate 344 contacts ATP. The interval 357–366 (WRAYPFHWAW) is important for interaction with membranes.

This sequence belongs to the PI3/PI4-kinase family. Type II PI4K subfamily. In terms of tissue distribution, widely expressed.

The protein localises to the cytoplasm. The protein resides in the cytosol. It localises to the golgi apparatus membrane. Its subcellular location is the endoplasmic reticulum membrane. It is found in the cell membrane. The protein localises to the early endosome membrane. The catalysed reaction is a 1,2-diacyl-sn-glycero-3-phospho-(1D-myo-inositol) + ATP = a 1,2-diacyl-sn-glycero-3-phospho-(1D-myo-inositol 4-phosphate) + ADP + H(+). With respect to regulation, inhibited by phenylarsine oxide and adenosine. Activation through membrane association is stimulated by active RAC1. Together with PI4K2A and the type III PI4Ks (PIK4CA and PIK4CB) it contributes to the overall PI4-kinase activity of the cell. This contribution may be especially significant in plasma membrane, endosomal and Golgi compartments. The phosphorylation of phosphatidylinositol (PI) to PI4P is the first committed step in the generation of phosphatidylinositol 4,5-bisphosphate (PIP2), a precursor of the second messenger inositol 1,4,5-trisphosphate (InsP3). Contributes to the production of InsP3 in stimulated cells and is likely to be involved in the regulation of vesicular trafficking. The protein is Phosphatidylinositol 4-kinase type 2-beta (PI4K2B) of Homo sapiens (Human).